The following is a 949-amino-acid chain: Sensor histidine kinase RcsC (949 aa).

Residues 1–19 (MKYLASFRTTLKASRYMFR) lie on the Cytoplasmic side of the membrane. The helical transmembrane segment at 20 to 41 (ALALVLWLLIAFSSVFYIVNAL) threads the bilayer. The Periplasmic portion of the chain corresponds to 42–313 (HQRESEIRQE…PVDKVLERIR (272 aa)). A helical membrane pass occupies residues 314–335 (MLILNAILLNVLAGAALFTLAR). The Cytoplasmic segment spans residues 336 to 949 (MYERRIFIPA…AERVRKSRDS (614 aa)). In terms of domain architecture, PAS spans 357–425 (QFNRKIVASA…VLTSNNTNLQ (69 aa)). The 217-residue stretch at 476 to 692 (TVSHELRTPL…QFTVRIPLYG (217 aa)) folds into the Histidine kinase domain. His479 bears the Phosphohistidine; by autocatalysis mark. One can recognise an ABL domain in the interval 705-805 (SGKRCWLAVR…ARIYLIEMES (101 aa)). The region spanning 826–940 (MILVVDDHPI…VIKQTLTLYA (115 aa)) is the Response regulatory domain. At Asp875 the chain carries 4-aspartylphosphate.

It belongs to the RcsC family. In terms of assembly, interacts with RcsD. Post-translationally, autophosphorylated. Activation probably requires a transfer of a phosphate group from a His in the transmitter domain to an Asp in the receiver domain.

The protein localises to the cell inner membrane. The catalysed reaction is ATP + protein L-histidine = ADP + protein N-phospho-L-histidine.. Its activity is regulated as follows. The Rcs phosphorelay may be activated by RcsF. DjlA, LolA and OmpG might act as a regulator of the phosphorelay. Activity is probably up-regulated by YmgA/AriR, and possibly down-regulated by YcgZ, all 3 are connector proteins providing additional signal input into signaling system. In terms of biological role, component of the Rcs signaling system, which controls transcription of numerous genes. RcsC functions as a membrane-associated protein kinase that phosphorylates RcsD in response to environmental signals. The phosphoryl group is then transferred to the response regulator RcsB. RcsC also has phosphatase activity. The system controls expression of genes involved in colanic acid capsule synthesis, biofilm formation and cell division. This Escherichia coli (strain K12) protein is Sensor histidine kinase RcsC.